Reading from the N-terminus, the 702-residue chain is Elongation factor G (702 aa).

A tr-type G domain is found at 8–290; the sequence is HRVRNIGIAA…AVAMYLPAPT (283 aa). Residues 17–24, 87–91, and 141–144 contribute to the GTP site; these read AHIDAGKT, DTPGH, and NKMD.

The protein belongs to the TRAFAC class translation factor GTPase superfamily. Classic translation factor GTPase family. EF-G/EF-2 subfamily.

It is found in the cytoplasm. Its function is as follows. Catalyzes the GTP-dependent ribosomal translocation step during translation elongation. During this step, the ribosome changes from the pre-translocational (PRE) to the post-translocational (POST) state as the newly formed A-site-bound peptidyl-tRNA and P-site-bound deacylated tRNA move to the P and E sites, respectively. Catalyzes the coordinated movement of the two tRNA molecules, the mRNA and conformational changes in the ribosome. In Aliarcobacter butzleri (strain RM4018) (Arcobacter butzleri), this protein is Elongation factor G.